The primary structure comprises 880 residues: Interference hedgehog (880 aa).

The first 20 residues, 1 to 20 (MTLLTSSLLLFSLLTSRLEA), serve as a signal peptide directing secretion. The Extracellular segment spans residues 21-703 (IPVLEKSPAH…ETFNMSPMLT (683 aa)). Ig-like C2-type domains lie at 45–142 (PGVR…TARL), 132–232 (PLVV…ERIQ), 252–340 (PHLL…YIKV), and 346–432 (PQIV…LQVN). Intrachain disulfides connect Cys68–Cys126, Cys173–Cys220, Cys276–Cys324, and Cys367–Cys414. Residues Asn102 and Asn209 are each glycosylated (N-linked (GlcNAc...) asparagine). The segment at 426–467 (GTLLQVNPKQIQEPRESGGTHRPKPNQGSKQKQMYPPTPPNV) is disordered. Fibronectin type-III domains lie at 461–567 (PPTP…LQPG) and 575–670 (VPEL…TQRP). An N-linked (GlcNAc...) asparagine glycan is attached at Asn466. Arg497, Lys501, Lys503, and Arg541 together coordinate heparin. N-linked (GlcNAc...) asparagine glycosylation occurs at Asn557. Residues 662–697 (LKQGRTQRPKTSTTEEPTLQMGDRDTTTPSHNETFN) are disordered. Polar residues-rich tracts occupy residues 665–678 (GRTQRPKTSTTEEP) and 688–697 (TTPSHNETFN). Asn693 carries an N-linked (GlcNAc...) asparagine glycan. A helical membrane pass occupies residues 704–724 (GTIGGGAVLILLLISTCLCVC). Residues 725–880 (RRRTSRSRGN…SSGSLNSVGV (156 aa)) lie on the Cytoplasmic side of the membrane. Disordered regions lie at residues 728-762 (TSRSRGNNPNKPRMAELRDDFVPLGNCSPTKQRQR) and 775-880 (QQQQ…SVGV). Low complexity-rich tracts occupy residues 823–837 (RAGGSNGSNNGNNNN) and 864–880 (SSRSENLSSGSLNSVGV).

The protein belongs to the immunoglobulin superfamily. IHOG family. In terms of assembly, homodimer. Heterotetramer; 2 iHog chains bind 2 hh chains when facilitated by heparin, heparin is required to promote high-affinity interactions between hh and iHog.

It localises to the membrane. Functionally, mediates response to the active Hedgehog (Hh) protein signal in embryos, functioning upstream or at the level of patched (ptc). This is Interference hedgehog from Drosophila sechellia (Fruit fly).